Here is a 479-residue protein sequence, read N- to C-terminus: Anaerobic nitric oxide reductase flavorubredoxin (479 aa).

Positions 30 to 210 (LRGSSYNSYL…PFSRLVTPKI (181 aa)) are zinc metallo-hydrolase. Residues H79, E81, D83, H147, D166, and H227 each coordinate Fe cation. Residues 254-393 (ITIFYDTMSN…LCREHGREIA (140 aa)) enclose the Flavodoxin-like domain. Residues 260 to 264 (TMSNN) and 342 to 369 (AFGS…EMSL) contribute to the FMN site. Positions 423–474 (GPRMQCSVCQWIYDPAKGEPMQDVAPGTPWSEVPDNFLCPECSLGKDVFDEL) constitute a Rubredoxin-like domain. Fe cation contacts are provided by C428, C431, C461, and C464.

The protein in the N-terminal section; belongs to the zinc metallo-hydrolase group 3 family. In terms of assembly, homotetramer. Fe cation is required as a cofactor. FMN serves as cofactor.

It is found in the cytoplasm. The protein operates within nitrogen metabolism; nitric oxide reduction. Anaerobic nitric oxide reductase; uses NADH to detoxify nitric oxide (NO), protecting several 4Fe-4S NO-sensitive enzymes. Has at least 2 reductase partners, only one of which (NorW, flavorubredoxin reductase) has been identified. NO probably binds to the di-iron center; electrons enter from the NorW at rubredoxin and are transferred sequentially to the FMN center and the di-iron center. Also able to function as an aerobic oxygen reductase. The polypeptide is Anaerobic nitric oxide reductase flavorubredoxin (Escherichia coli O6:H1 (strain CFT073 / ATCC 700928 / UPEC)).